The following is a 670-amino-acid chain: Receptor for retinol uptake stra6 (670 aa).

Over 1–38 (MSAETVNNYDYSDWYENAAPTKAPVEVIPPCDPTADEG) the chain is Extracellular. Residues 39 to 59 (LFHICIAAISLVVMLVLAILA) traverse the membrane as a helical segment. At 60–87 (RRQKLSDNQRGLTGLLSPVNFLDHTQHK) the chain is on the cytoplasmic side. A helical membrane pass occupies residues 88–108 (GLAVAVYGVLFCKLVGMVLSH). The Extracellular segment spans residues 109 to 121 (HPLPFTKEVANKE). Residues 122-142 (FWMILALLYYPALYYPLLACG) traverse the membrane as a helical segment. Topologically, residues 143–145 (TLH) are cytoplasmic. The chain crosses the membrane as a helical span at residues 146-166 (NKVGYVLGSLLSWTHFGILVW). Over 167–182 (QKVDCPKTPQIYKYYA) the chain is Extracellular. Residues 183–203 (LFGSLPQIACLAFLSFQYPLL) traverse the membrane as a helical segment. Residues 204 to 274 (LFKGLQNTET…PEDVFRFPLK (71 aa)) are Cytoplasmic-facing. The helical transmembrane segment at 275-295 (LAISVVVAFIALYQMALLLIS) threads the bilayer. The Extracellular segment spans residues 296–346 (GVLPTLHIVRRGVDENIAFLLAGFNIILSNDRQEVVRIVVYYLWCVEICYV). The chain crosses the membrane as a helical span at residues 347-367 (SAVTLSCLVNLLMLMRSMVLH). The Cytoplasmic portion of the chain corresponds to 368-401 (RSNLKGLYRGDSLNVFNCHRSIRPSRPALVCWMG). The chain crosses the membrane as a helical span at residues 402-422 (FTSYQAAFLCLGMAIQTLVFF). The Extracellular portion of the chain corresponds to 423 to 452 (ICILFAVFLIIIPILWGTNLMLFHIIGNLW). Residues 453-473 (PFWLTLVLAALIQHVASRFLF) traverse the membrane as a helical segment. At 474–488 (IRKDGGTRDLNNRGS) the chain is on the cytoplasmic side. The helical intramembrane region spans 489-526 (LFLLSYILFLVNVMIGVVLGIWRVVITALFNIVHLGRL). The Cytoplasmic portion of the chain corresponds to 527 to 670 (DISLLNRNVE…KEAESAAASN (144 aa)). Positions 600–626 (VSNAKRARAHWQLLYTLVNNPSLVGSR) are interaction with calmodulin. Positions 640-670 (GALSRTSKEGSKKDGSVNEPSKEAESAAASN) are disordered. Basic and acidic residues predominate over residues 645 to 664 (TSKEGSKKDGSVNEPSKEAE).

Homodimer. Interacts (via C-terminus) with calmodulin.

It is found in the cell membrane. Its function is as follows. Retinol transporter. Accepts retinol from the extracellular retinol-binding protein rbp4, mediates retinol transport across the cell membrane, and then transmits retinol to the cytoplasmic retinol-binding protein rbp1. Required for normal vitamin A homeostasis. This is Receptor for retinol uptake stra6 from Danio rerio (Zebrafish).